Here is a 213-residue protein sequence, read N- to C-terminus: Ras-related protein Rab-25 (213 aa).

Residues S21, G24, K25, T26, N27, S38, H39, T43, and T44 each contribute to the GTP site. T26 provides a ligand contact to Mg(2+). 2 short sequence motifs (switch) span residues N35–F49 and D67–G84. The Mg(2+) site is built by T44 and D67. Residues G70, N125, K126, D128, A156, and L157 each coordinate GTP. 2 S-geranylgeranyl cysteine lipidation sites follow: C209 and C210. C210 carries the cysteine methyl ester modification. Residues I211–L213 constitute a propeptide, removed in mature form.

It belongs to the small GTPase superfamily. Rab family. In terms of assembly, interacts (GTP-bound form) with RAB11FIP1, RAB11FIP2, RAB11FIP3 and RAB11FIP4. Interacts (via the hypervariable C-terminal region) with ITGB1 (via the cytoplasmic region); the interaction is GTP-dependent. Interacts with ITGAV. Associates with the integrin alpha-V/beta-1 heterodimer. Interacts with VPS33B. Mg(2+) is required as a cofactor. As to expression, expression is restricted to epithelial cells. Expressed in the gastrointestinal mucosa, (highest expression seen in the ileum and colon), kidney, and lung. A very minor and variable level of expression is seen in the splenic tissue.

The protein localises to the cell membrane. It is found in the cell projection. It localises to the pseudopodium membrane. Its subcellular location is the cytoplasmic vesicle. It catalyses the reaction GTP + H2O = GDP + phosphate + H(+). Regulated by guanine nucleotide exchange factors (GEFs) which promote the exchange of bound GDP for free GTP. Regulated by GTPase activating proteins (GAPs) which increase the GTP hydrolysis activity. Inhibited by GDP dissociation inhibitors (GDIs) which prevent Rab-GDP dissociation. Functionally, the small GTPases Rab are key regulators of intracellular membrane trafficking, from the formation of transport vesicles to their fusion with membranes. Rabs cycle between an inactive GDP-bound form and an active GTP-bound form that is able to recruit to membranes different set of downstream effectors directly responsible for vesicle formation, movement, tethering and fusion. RAB25 regulates epithelial cell differentiation, proliferation and survival, thereby playing key roles in tumorigenesis. Promotes invasive migration of cells in which it functions to localize and maintain integrin alpha-V/beta-1 at the tips of extending pseudopodia. Involved in the regulation of epithelial morphogenesis through the control of CLDN4 expression and localization at tight junctions. May selectively regulate the apical recycling pathway. Together with MYO5B regulates transcytosis. The protein is Ras-related protein Rab-25 (RAB25) of Oryctolagus cuniculus (Rabbit).